A 328-amino-acid chain; its full sequence is Phosphate acetyltransferase (328 aa).

The protein belongs to the phosphate acetyltransferase and butyryltransferase family.

It localises to the cytoplasm. It catalyses the reaction acetyl-CoA + phosphate = acetyl phosphate + CoA. Its pathway is metabolic intermediate biosynthesis; acetyl-CoA biosynthesis; acetyl-CoA from acetate: step 2/2. This Staphylococcus aureus (strain COL) protein is Phosphate acetyltransferase (pta).